The following is a 468-amino-acid chain: MFSITTLRDWTPDPGSIICWHASPTAKAKARQAPISEVPPSYQQAQHLRRYRDHVARGLDMSRLMIFTWDLPGRCNIRAMNYAINAHLRRHDTYHSWFEFDNAEHIVRHTIADPADIEVVQAEHQNMTSAELRHHIATPQPLQWDCFLFGIIQSDDHFTFYASIAHLCVDPMIVGVLFIEIHMMYSALVGGDPPIELPPAGRYDDHCVRQYADTAALTLDSARVRRWVEFAANNDGTLPHFPLPLGDLSVPHTGKLLTETLMDEQQGERFEAACVAAGARFSGGVFACAALAERELTNCETFDVVTTTDTRRTPTELRTTGWFTGLVPITVPVASGLFDSAARVAQISFDSGKDLATVPFDRVLELARPETGLRPPRPGNFVMSFLDASIAPLSTVANSDLNFRIYDEGRVSHQVSMWVNRYQHQTTVTVLFPDNPIASESVANYIAAMKSIYIRTADGTLATLKPGT.

This sequence belongs to the PapA acyltransferase family.

It carries out the reaction 2-O-sulfo-alpha,alpha-trehalose + hexadecanoyl-CoA = 2-O-sulfo-2'-O-hexadecanoyl-alpha,alpha-trehalose + CoA. Catalyzes the acylation of trehalose-2-sulfate by adding the palmitoyl group at the 2'-position to yield the intermediate trehalose-2-sulfate-2'-palmitate (SL659). This Mycobacterium tuberculosis (strain ATCC 25177 / H37Ra) protein is Trehalose-2-sulfate acyltransferase PapA2 (papA2).